We begin with the raw amino-acid sequence, 310 residues long: Methionyl-tRNA formyltransferase (310 aa).

(6S)-5,6,7,8-tetrahydrofolate is bound at residue 109–112 (SLLP).

Belongs to the Fmt family.

The catalysed reaction is L-methionyl-tRNA(fMet) + (6R)-10-formyltetrahydrofolate = N-formyl-L-methionyl-tRNA(fMet) + (6S)-5,6,7,8-tetrahydrofolate + H(+). Its function is as follows. Attaches a formyl group to the free amino group of methionyl-tRNA(fMet). The formyl group appears to play a dual role in the initiator identity of N-formylmethionyl-tRNA by promoting its recognition by IF2 and preventing the misappropriation of this tRNA by the elongation apparatus. In Pseudomonas entomophila (strain L48), this protein is Methionyl-tRNA formyltransferase.